Consider the following 545-residue polypeptide: CTP synthase (545 aa).

Residues 1-266 (MTTNYIFVTG…DDYICKRFSL (266 aa)) form an amidoligase domain region. CTP is bound at residue Ser14. Residue Ser14 participates in UTP binding. ATP-binding positions include 15 to 20 (SLGKGI) and Asp72. The Mg(2+) site is built by Asp72 and Glu140. Residues 147–149 (DIE), 187–192 (KTKPTQ), and Lys223 contribute to the CTP site. UTP is bound by residues 187–192 (KTKPTQ) and Lys223. Position 239-241 (239-241 (KDV)) interacts with ATP. Residues 291–542 (TIGMVGKYIE…VKAASEYQKR (252 aa)) form the Glutamine amidotransferase type-1 domain. Gly352 is an L-glutamine binding site. Cys379 acts as the Nucleophile; for glutamine hydrolysis in catalysis. Residues 380 to 383 (LGMQ), Glu403, and Arg470 each bind L-glutamine. Catalysis depends on residues His515 and Glu517.

This sequence belongs to the CTP synthase family. Homotetramer.

It carries out the reaction UTP + L-glutamine + ATP + H2O = CTP + L-glutamate + ADP + phosphate + 2 H(+). It catalyses the reaction L-glutamine + H2O = L-glutamate + NH4(+). The enzyme catalyses UTP + NH4(+) + ATP = CTP + ADP + phosphate + 2 H(+). Its pathway is pyrimidine metabolism; CTP biosynthesis via de novo pathway; CTP from UDP: step 2/2. With respect to regulation, allosterically activated by GTP, when glutamine is the substrate; GTP has no effect on the reaction when ammonia is the substrate. The allosteric effector GTP functions by stabilizing the protein conformation that binds the tetrahedral intermediate(s) formed during glutamine hydrolysis. Inhibited by the product CTP, via allosteric rather than competitive inhibition. In terms of biological role, catalyzes the ATP-dependent amination of UTP to CTP with either L-glutamine or ammonia as the source of nitrogen. Regulates intracellular CTP levels through interactions with the four ribonucleotide triphosphates. The polypeptide is CTP synthase (Enterobacter sp. (strain 638)).